Here is a 72-residue protein sequence, read N- to C-terminus: IDMVVECNKDGYLMEHDGCKLSCLMKKGTFCAEECQRMKGKDGYCYAWLACYCYNMPDWVKTWSRATNRCGK.

An N-terminal signal peptide occupies residues 1–7 (IDMVVEC). Positions 9–71 (KDGYLMEHDG…TWSRATNRCG (63 aa)) constitute an LCN-type CS-alpha/beta domain. Disulfide bonds link cysteine 19/cysteine 70, cysteine 23/cysteine 45, cysteine 31/cysteine 51, and cysteine 35/cysteine 53.

In terms of tissue distribution, expressed by the venom gland.

It localises to the secreted. Its function is as follows. Beta toxins bind voltage-independently at site-4 of sodium channels (Nav) and shift the voltage of activation toward more negative potentials thereby affecting sodium channel activation and promoting spontaneous and repetitive firing. This chain is Putative beta-neurotoxin, found in Tityus pachyurus (Colombian scorpion).